A 242-amino-acid chain; its full sequence is Type III pantothenate kinase (242 aa).

Residue 7-14 coordinates ATP; that stretch reads DLGNSRFK. Residues tyrosine 91 and 98–101 contribute to the substrate site; that span reads GVDR. The Proton acceptor role is filled by aspartate 100. Threonine 121 contributes to the ATP binding site. Threonine 171 provides a ligand contact to substrate.

The protein belongs to the type III pantothenate kinase family. Homodimer. Requires NH4(+) as cofactor. The cofactor is K(+).

The protein localises to the cytoplasm. The catalysed reaction is (R)-pantothenate + ATP = (R)-4'-phosphopantothenate + ADP + H(+). It participates in cofactor biosynthesis; coenzyme A biosynthesis; CoA from (R)-pantothenate: step 1/5. In terms of biological role, catalyzes the phosphorylation of pantothenate (Pan), the first step in CoA biosynthesis. In Xylella fastidiosa (strain 9a5c), this protein is Type III pantothenate kinase.